The chain runs to 858 residues: Ubiquitin carboxyl-terminal hydrolase 13 (858 aa).

Ser112 carries the phosphoserine modification. The UBP-type; degenerate zinc-finger motif lies at 185 to 293 (PVSKYANNLV…KHLAHFGIDM (109 aa)). Zn(2+) contacts are provided by Cys209, Cys212, Cys229, and His242. Residue Lys309 forms a Glycyl lysine isopeptide (Lys-Gly) (interchain with G-Cter in SUMO2) linkage. The USP domain maps to 334 to 856 (TGLKNLGNSC…LGYMYFYRRI (523 aa)). Residue Cys343 is the Nucleophile of the active site. Lys403 is covalently cross-linked (Glycyl lysine isopeptide (Lys-Gly) (interchain with G-Cter in SUMO2)). 2 consecutive UBA domains span residues 650-691 (DIDE…IIVH) and 722-762 (QPPE…IFSH). The active-site Proton acceptor is the His818.

Belongs to the peptidase C19 family. In terms of assembly, interacts with UFD1. Interacts (via UBA domains) with SIAH2 (when ubiquitinated). Interacts with BAG6; the interaction is direct and may mediate UBL4A deubiquitination. Interacts (via UBA 2 domain) with AMFR; the interaction is direct. Interacts with UBL4A; may be indirect via BAG6. Interacts with NEDD4.

It is found in the cytoplasm. It catalyses the reaction Thiol-dependent hydrolysis of ester, thioester, amide, peptide and isopeptide bonds formed by the C-terminal Gly of ubiquitin (a 76-residue protein attached to proteins as an intracellular targeting signal).. With respect to regulation, specifically inhibited by spautin-1 (specific and potent autophagy inhibitor-1), a derivative of MBCQ that binds to USP13 and inhibits deubiquitinase activity. Regulated by PIK3C3/VPS34-containing complexes. The weak deubiquitinase activity in vitro suggests the existence of some mechanism that activates the enzyme. Functionally, deubiquitinase that mediates deubiquitination of target proteins such as BECN1, MITF, SKP2 and USP10 and is involved in various processes such as autophagy, endoplasmic reticulum-associated degradation (ERAD), cell cycle progression or DNA damage response. Component of a regulatory loop that controls autophagy and p53/TP53 levels: mediates deubiquitination of BECN1, a key regulator of autophagy, leading to stabilize the PIK3C3/VPS34-containing complexes. Alternatively, forms with NEDD4 a deubiquitination complex, which subsequently stabilizes VPS34 to promote autophagy. Also deubiquitinates USP10, an essential regulator of p53/TP53 stability. In turn, PIK3C3/VPS34-containing complexes regulate USP13 stability, suggesting the existence of a regulatory system by which PIK3C3/VPS34-containing complexes regulate p53/TP53 protein levels via USP10 and USP13. Recruited by nuclear UFD1 and mediates deubiquitination of SKP2, thereby regulating endoplasmic reticulum-associated degradation (ERAD). Also regulates ERAD through the deubiquitination of UBL4A a component of the BAG6/BAT3 complex. Mediates stabilization of SIAH2 independently of deubiquitinase activity: binds ubiquitinated SIAH2 and acts by impairing SIAH2 autoubiquitination. Regulates the cell cycle progression by stabilizing cell cycle proteins such as SKP2 and AURKB. In addition, plays an important role in maintaining genomic stability and in DNA replication checkpoint activation via regulation of RAP80 and TOPBP1. Deubiquitinates the multifunctional protein HMGB1 and subsequently drives its nucleocytoplasmic localization and its secretion. Positively regulates type I and type II interferon signalings by deubiquitinating STAT1 but negatively regulates antiviral response by deubiquitinating STING1. In Mus musculus (Mouse), this protein is Ubiquitin carboxyl-terminal hydrolase 13 (Usp13).